The following is a 261-amino-acid chain: UPF0246 protein Vapar_1301 (261 aa).

The protein belongs to the UPF0246 family.

This Variovorax paradoxus (strain S110) protein is UPF0246 protein Vapar_1301.